The chain runs to 309 residues: Taste receptor type 2 member 46 (309 aa).

Met-1 is a topological domain (extracellular). A helical membrane pass occupies residues 2-22 (ITFLPITFSILIVVIFFIGNF). At 23-46 (ANGFIALINSIEWVKRQKISFAGQ) the chain is on the cytoplasmic side. The chain crosses the membrane as a helical span at residues 47 to 67 (ILTALAVSRVGLLWVLSLHWY). Over 68–86 (ATEFNLAFHSVEVRSTAYN) the chain is Extracellular. A helical transmembrane segment spans residues 87-107 (VWVVTNHFSNWLSTSLSMFYL). Topologically, residues 108-126 (LRIATFSNLIFLHLNRRVK) are cytoplasmic. Residues 127 to 147 (SVILVTLLGPLLFLVCQLFVM) form a helical membrane-spanning segment. The Extracellular portion of the chain corresponds to 148-178 (NMNQIVRTKEYEGNMTWKIKLKSAMYLSNTT). N-linked (GlcNAc...) asparagine glycosylation is found at Asn-161 and Asn-176. Residues 179 to 199 (VAMLANFVPLTLTLISFLLLI) form a helical membrane-spanning segment. Over 200–229 (CSLCKHLKKMRVHGKGSQDPSTKVHTKALQ) the chain is Cytoplasmic. A helical transmembrane segment spans residues 230-250 (IVTSFLLVCAIYFLSIILSVW). Topologically, residues 251-259 (NSGGLENKP) are extracellular. The chain crosses the membrane as a helical span at residues 260 to 280 (FFMFCQAIKFSYPSTHPFILI). Topologically, residues 281 to 309 (WGNKTLKQTFLSVLRNVRYWVKGQKPSSP) are cytoplasmic.

This sequence belongs to the G-protein coupled receptor T2R family.

It localises to the membrane. It is found in the cell projection. Its subcellular location is the cilium membrane. Receptor that may play a role in the perception of bitterness and is gustducin-linked. May play a role in sensing the chemical composition of the gastrointestinal content. The activity of this receptor may stimulate alpha gustducin, mediate PLC-beta-2 activation and lead to the gating of TRPM5. In airway epithelial cells, binding of bitter compounds increases the intracellular calcium ion concentration and stimulates ciliary beat frequency. The polypeptide is Taste receptor type 2 member 46 (TAS2R46) (Papio hamadryas (Hamadryas baboon)).